The following is a 124-amino-acid chain: Small ribosomal subunit protein bS6 (124 aa).

Belongs to the bacterial ribosomal protein bS6 family.

Its function is as follows. Binds together with bS18 to 16S ribosomal RNA. This chain is Small ribosomal subunit protein bS6, found in Rippkaea orientalis (strain PCC 8801 / RF-1) (Cyanothece sp. (strain PCC 8801)).